A 274-amino-acid chain; its full sequence is PTS system sorbose-specific EIID component (274 aa).

The PTS EIID domain occupies Lys-4–Leu-273. Helical transmembrane passes span Leu-61–Met-81, Ile-99–Leu-119, Leu-126–Phe-146, Ile-186–Leu-206, Ile-226–Leu-246, and Pro-253–Leu-273.

It localises to the cell inner membrane. Functionally, the phosphoenolpyruvate-dependent sugar phosphotransferase system (PTS), a major carbohydrate active transport system, catalyzes the phosphorylation of incoming sugar substrates concomitant with their translocation across the cell membrane. The enzyme II SorABFM PTS system is involved in sorbose transport. This chain is PTS system sorbose-specific EIID component, found in Klebsiella pneumoniae.